The following is a 123-amino-acid chain: MAFRAARIAFAWKATNPANTTIRQYIKETLEEAPEKISQTVKKATGKASKKIDENKDKSPQEMAENAKQSVKQTAKDAKDTDYQQKAKDAGKKIKEEFSQRSENVLEETRREGMNRDGGVKKE.

Residues 34-123 (PEKISQTVKK…MNRDGGVKKE (90 aa)) are disordered. Composition is skewed to basic and acidic residues over residues 50–60 (KKIDENKDKSP), 74–100 (TAKDAKDTDYQQKAKDAGKKIKEEFSQ), and 107–123 (EETRREGMNRDGGVKKE).

The protein resides in the mitochondrion. This is an uncharacterized protein from Schizosaccharomyces pombe (strain 972 / ATCC 24843) (Fission yeast).